Reading from the N-terminus, the 574-residue chain is Putative DNA-directed RNA polymerase subunit alpha-like 1 (574 aa).

The tract at residues 1–352 is alpha N-terminal domain (alpha-NTD); that stretch reads MTNNKNFADW…ELFSLFLQTS (352 aa). Residues 419 to 574 form an alpha C-terminal domain (alpha-CTD) region; the sequence is PDYDRYNSIT…RERKRGNREF (156 aa). Residues 534–574 are disordered; that stretch reads QETLRKEQDEQSSQQQKDQMEKRRWERQNRERERKRGNREF. Residues 551-574 show a composition bias toward basic and acidic residues; sequence DQMEKRRWERQNRERERKRGNREF.

This sequence belongs to the RNA polymerase alpha chain family. As to quaternary structure, in plastids the minimal PEP RNA polymerase catalytic core is composed of four subunits: alpha, beta, beta', and beta''. When a (nuclear-encoded) sigma factor is associated with the core the holoenzyme is formed, which can initiate transcription.

The protein localises to the plastid. It localises to the chloroplast. The catalysed reaction is RNA(n) + a ribonucleoside 5'-triphosphate = RNA(n+1) + diphosphate. In terms of biological role, DNA-dependent RNA polymerase catalyzes the transcription of DNA into RNA using the four ribonucleoside triphosphates as substrates. This is Putative DNA-directed RNA polymerase subunit alpha-like 1 (rpoAL1-A) from Pelargonium hortorum (Common geranium).